Consider the following 274-residue polypeptide: Large ribosomal subunit protein uL2 (274 aa).

The segment at 222-257 (GVAMNPVDHPHGGGEGRTSGGRHPVSPWGVPTKGYK) is disordered.

This sequence belongs to the universal ribosomal protein uL2 family. In terms of assembly, part of the 50S ribosomal subunit. Forms a bridge to the 30S subunit in the 70S ribosome.

Functionally, one of the primary rRNA binding proteins. Required for association of the 30S and 50S subunits to form the 70S ribosome, for tRNA binding and peptide bond formation. It has been suggested to have peptidyltransferase activity; this is somewhat controversial. Makes several contacts with the 16S rRNA in the 70S ribosome. This Nitrosococcus oceani (strain ATCC 19707 / BCRC 17464 / JCM 30415 / NCIMB 11848 / C-107) protein is Large ribosomal subunit protein uL2.